A 107-amino-acid polypeptide reads, in one-letter code: uncharacterized protein (107 aa).

Residues 25 to 42 (LSLCSVLLSWLICAMCLW) form a helical membrane-spanning segment.

The protein localises to the host membrane. This is an uncharacterized protein from Galliformes (FAdV-1).